A 391-amino-acid chain; its full sequence is Alkanesulfonate monooxygenase (391 aa).

Belongs to the SsuD family.

The enzyme catalyses an alkanesulfonate + FMNH2 + O2 = an aldehyde + FMN + sulfite + H2O + 2 H(+). Its function is as follows. Catalyzes the desulfonation of aliphatic sulfonates. This chain is Alkanesulfonate monooxygenase, found in Methylorubrum extorquens (strain CM4 / NCIMB 13688) (Methylobacterium extorquens).